The following is a 76-amino-acid chain: Alpha/kappa-conotoxin-like fe14.2 (76 aa).

Positions 1 to 24 (MPSVRSVTCCCLLWMMLSVQLVTP) are cleaved as a signal peptide. The propeptide occupies 25 to 39 (GSPGTAQLSGQRTAR). Disulfide bonds link cysteine 46-cysteine 61 and cysteine 50-cysteine 63. Arginine 64 carries the arginine amide modification. Residues 65-76 (GKRDVVSSSMAV) constitute a propeptide that is removed on maturation.

The protein belongs to the conotoxin J superfamily. In terms of tissue distribution, expressed by the venom duct.

It localises to the secreted. Its function is as follows. Highly inhibits both nicotinic acetylcholine receptors (neuronal (alpha-3/beta-4) and muscular (alpha-1/beta-1/epsilon/delta) subtypes) and the voltage-gated potassium channel Kv1.6/KCNA6 subtype. The polypeptide is Alpha/kappa-conotoxin-like fe14.2 (Conus ferrugineus (Cone snail)).